Consider the following 468-residue polypeptide: 6-phospho-beta-galactosidase (468 aa).

5 residues coordinate D-galactose 6-phosphate: Gln19, His116, Asn159, Glu160, and Asn297. Glu160 (proton donor) is an active-site residue. The Nucleophile role is filled by Glu375. 4 residues coordinate D-galactose 6-phosphate: Ser428, Trp429, Lys435, and Tyr437.

Belongs to the glycosyl hydrolase 1 family.

It carries out the reaction a 6-phospho-beta-D-galactoside + H2O = D-galactose 6-phosphate + an alcohol. Its pathway is carbohydrate metabolism; lactose degradation; D-galactose 6-phosphate and beta-D-glucose from lactose 6-phosphate: step 1/1. This Streptococcus pyogenes serotype M6 (strain ATCC BAA-946 / MGAS10394) protein is 6-phospho-beta-galactosidase.